The chain runs to 247 residues: Proteasome subunit alpha type-7-1 (247 aa).

This sequence belongs to the peptidase T1A family. As to quaternary structure, the 26S proteasome consists of a 20S proteasome core and two 19S regulatory subunits. The 20S proteasome core is composed of 28 subunits that are arranged in four stacked rings, resulting in a barrel-shaped structure. The two end rings are each formed by seven alpha subunits, and the two central rings are each formed by seven beta subunits. The catalytic chamber with the active sites is on the inside of the barrel.

Its subcellular location is the cytoplasm. The protein localises to the nucleus. Functionally, the proteasome is a multicatalytic proteinase complex which is characterized by its ability to cleave peptides with Arg, Phe, Tyr, Leu, and Glu adjacent to the leaving group at neutral or slightly basic pH. The proteasome has an ATP-dependent proteolytic activity. The chain is Proteasome subunit alpha type-7-1 (Pros28.1) from Drosophila virilis (Fruit fly).